The following is a 549-amino-acid chain: Siroheme synthase (549 aa).

The interval 1-203 (MNTFPLFFKL…GNENEALAQL (203 aa)) is precorrin-2 dehydrogenase /sirohydrochlorin ferrochelatase. NAD(+) is bound by residues 22–23 (DV) and 43–44 (PS). Ser-128 is modified (phosphoserine). Positions 247 to 549 (GEVYIVGAGP…DGDLEQLIIG (303 aa)) are uroporphyrinogen-III C-methyltransferase. Pro-256 contributes to the S-adenosyl-L-methionine binding site. Asp-279 serves as the catalytic Proton acceptor. The active-site Proton donor is the Lys-301. S-adenosyl-L-methionine is bound by residues 332 to 334 (GGD), Ile-337, 362 to 363 (TA), Met-414, and Ala-443.

In the N-terminal section; belongs to the precorrin-2 dehydrogenase / sirohydrochlorin ferrochelatase family. This sequence in the C-terminal section; belongs to the precorrin methyltransferase family.

It catalyses the reaction uroporphyrinogen III + 2 S-adenosyl-L-methionine = precorrin-2 + 2 S-adenosyl-L-homocysteine + H(+). It carries out the reaction precorrin-2 + NAD(+) = sirohydrochlorin + NADH + 2 H(+). The enzyme catalyses siroheme + 2 H(+) = sirohydrochlorin + Fe(2+). It participates in cofactor biosynthesis; adenosylcobalamin biosynthesis; precorrin-2 from uroporphyrinogen III: step 1/1. The protein operates within cofactor biosynthesis; adenosylcobalamin biosynthesis; sirohydrochlorin from precorrin-2: step 1/1. It functions in the pathway porphyrin-containing compound metabolism; siroheme biosynthesis; precorrin-2 from uroporphyrinogen III: step 1/1. Its pathway is porphyrin-containing compound metabolism; siroheme biosynthesis; siroheme from sirohydrochlorin: step 1/1. It participates in porphyrin-containing compound metabolism; siroheme biosynthesis; sirohydrochlorin from precorrin-2: step 1/1. Multifunctional enzyme that catalyzes the SAM-dependent methylations of uroporphyrinogen III at position C-2 and C-7 to form precorrin-2 via precorrin-1. Then it catalyzes the NAD-dependent ring dehydrogenation of precorrin-2 to yield sirohydrochlorin. Finally, it catalyzes the ferrochelation of sirohydrochlorin to yield siroheme. In Psychrobacter arcticus (strain DSM 17307 / VKM B-2377 / 273-4), this protein is Siroheme synthase.